The following is a 423-amino-acid chain: Gamma-glutamyl phosphate reductase (423 aa).

This sequence belongs to the gamma-glutamyl phosphate reductase family.

It localises to the cytoplasm. It carries out the reaction L-glutamate 5-semialdehyde + phosphate + NADP(+) = L-glutamyl 5-phosphate + NADPH + H(+). It participates in amino-acid biosynthesis; L-proline biosynthesis; L-glutamate 5-semialdehyde from L-glutamate: step 2/2. Functionally, catalyzes the NADPH-dependent reduction of L-glutamate 5-phosphate into L-glutamate 5-semialdehyde and phosphate. The product spontaneously undergoes cyclization to form 1-pyrroline-5-carboxylate. The chain is Gamma-glutamyl phosphate reductase from Burkholderia lata (strain ATCC 17760 / DSM 23089 / LMG 22485 / NCIMB 9086 / R18194 / 383).